Here is a 443-residue protein sequence, read N- to C-terminus: Toxin YjjJ (443 aa).

Catalysis depends on aspartate 342, which acts as the Proton acceptor.

Belongs to the HipA Ser/Thr kinase family.

In terms of biological role, toxic when overexpressed in E.coli, leading to long filamentous cells. The toxic effect is neutralized by non-cognate antitoxin HipB. Does not seem to inhibit DNA, RNA or protein synthesis, and unlike paralogous toxin HipA its toxic activity is not counteracted by overexpression of GltX. Binds DNA. Might be a protein kinase. The sequence is that of Toxin YjjJ (yjjJ) from Escherichia coli (strain K12).